A 127-amino-acid polypeptide reads, in one-letter code: Major sperm protein 19/31/40/45/50/51/53/59/61/65/81/113/142 (127 aa).

Alanine 2 bears the N-acetylalanine mark. Residues 9–126 form the MSP domain; sequence DIQTQPGTKI…RRKNLPIEYN (118 aa).

In terms of assembly, helical subfilaments are built from MSP dimers; filaments are formed from two subfilaments coiling round one another; and filaments themselves supercoil to produce bundles. In terms of tissue distribution, sperm.

It localises to the cell projection. Its subcellular location is the pseudopodium. The protein resides in the cytoplasm. The protein localises to the cytoskeleton. Its function is as follows. Central component in molecular interactions underlying sperm crawling. Forms an extensive filament system that extends from sperm villipoda, along the leading edge of the pseudopod. This is Major sperm protein 19/31/40/45/50/51/53/59/61/65/81/113/142 (msp-19) from Caenorhabditis elegans.